Consider the following 296-residue polypeptide: MNLQTMIRTLQDYWSEQGCIMLQSYDVEKGAGTMSPYTFLKAIGPEPWKAGYIEPSRRPADGRYGENPNRLFQHHQFQVVMKPSPDNIQELYLGSLEKLGINPLEHDIRFVEDNWENPSLGCAGLGWEVWLDGMEITQFTYFQQVGGLECFPVTSEITYGVERLASYIQDKENVFDLEWTEGISYRDIFFQAEFENSTYAFETSNTDMLLTLFDTYEREAARQMQEGLVFPAYDYVLKCSHTFNLLDARGVVSVTERAQYIGRIRNLARRVAKTFYESREKLGFPLVKEEGGKRHE.

Belongs to the class-II aminoacyl-tRNA synthetase family. In terms of assembly, tetramer of two alpha and two beta subunits.

It is found in the cytoplasm. It catalyses the reaction tRNA(Gly) + glycine + ATP = glycyl-tRNA(Gly) + AMP + diphosphate. This chain is Glycine--tRNA ligase alpha subunit, found in Listeria welshimeri serovar 6b (strain ATCC 35897 / DSM 20650 / CCUG 15529 / CIP 8149 / NCTC 11857 / SLCC 5334 / V8).